Consider the following 314-residue polypeptide: 3'-5' exoribonuclease YhaM (314 aa).

Residues 163–279 enclose the HD domain; the sequence is HVVSMLDLAK…LHYIDNLDAK (117 aa).

Belongs to the YhaM family.

Functionally, shows a 3'-5' exoribonuclease activity. The polypeptide is 3'-5' exoribonuclease YhaM (Bacillus cereus (strain G9842)).